The chain runs to 389 residues: Liposome tubulation protein MamY (389 aa).

The Cytoplasmic segment spans residues 1–31 (MAIAAIMGDVLMLMGFNKAAFGKLNSASRAA). The chain crosses the membrane as a helical span at residues 32–52 (LIGAVIWAVLSIVYLTIFNGW). Over 53-62 (KNLFTMLPHE) the chain is Lumenal. A helical membrane pass occupies residues 63–83 (FFIVLLSIALPIGLTVLILML). Over 84 to 389 (SRIVKSVDTL…TETAPDSGMD (306 aa)) the chain is Cytoplasmic.

It belongs to the magnetosome MamY family.

Its subcellular location is the magnetosome membrane. Its function is as follows. Causes tubulation when added to magnetosome-derived liposomes, binds liposomes; may be involved in constriction of the cell inner membrane to form mature magnetosomes. Binds preferentially to cardiolipin, a component of bacterial membranes, with very poor to no binding of other tested (phospho)lipids. Addition of cardiolipin to magnetosome-derived lipids increases tubulation. May function with MamX, MamZ amd Mms6. The polypeptide is Liposome tubulation protein MamY (Paramagnetospirillum magneticum (strain ATCC 700264 / AMB-1) (Magnetospirillum magneticum)).